Reading from the N-terminus, the 243-residue chain is Transmembrane protein 174 (243 aa).

Helical transmembrane passes span 40–60 (LLFSGIFLGLVGITFTVMGWI) and 73–93 (LLGPVLLSVGVTFILIAVCKF).

In terms of assembly, interacts with SLC34A1; regulates SLC34A1 internalization by PTH and FGF23. In terms of tissue distribution, predominantly expressed in kidney. Selectively localized in the apical membrane of renal proximal tubule epithelial cells.

It localises to the endoplasmic reticulum membrane. The protein resides in the apical cell membrane. Its function is as follows. Regulator of plasma phosphate homeostasis. Decreases serum inorganic phosphate (Pi) uptake by regulating the sodium-phosphate cotransporter SLC34A1 trafficking by PTH and FGF23 in the kidney. The sequence is that of Transmembrane protein 174 (TMEM174) from Homo sapiens (Human).